The sequence spans 155 residues: Interleukin-2 (155 aa).

Positions 1 to 20 (MYKMQLLSCIALTLVLVANS) are cleaved as a signal peptide. O-linked (GalNAc...) threonine glycosylation is present at Thr23. Residues Cys79 and Cys127 are joined by a disulfide bond.

Belongs to the IL-2 family.

The protein resides in the secreted. In terms of biological role, cytokine produced by activated CD4-positive helper T-cells and to a lesser extend activated CD8-positive T-cells and natural killer (NK) cells that plays pivotal roles in the immune response and tolerance. Binds to a receptor complex composed of either the high-affinity trimeric IL-2R (IL2RA/CD25, IL2RB/CD122 and IL2RG/CD132) or the low-affinity dimeric IL-2R (IL2RB and IL2RG). Interaction with the receptor leads to oligomerization and conformation changes in the IL-2R subunits resulting in downstream signaling starting with phosphorylation of JAK1 and JAK3. In turn, JAK1 and JAK3 phosphorylate the receptor to form a docking site leading to the phosphorylation of several substrates including STAT5. This process leads to activation of several pathways including STAT, phosphoinositide-3-kinase/PI3K and mitogen-activated protein kinase/MAPK pathways. Functions as a T-cell growth factor and can increase NK-cell cytolytic activity as well. Promotes strong proliferation of activated B-cells and subsequently immunoglobulin production. Plays a pivotal role in regulating the adaptive immune system by controlling the survival and proliferation of regulatory T-cells, which are required for the maintenance of immune tolerance. Moreover, participates in the differentiation and homeostasis of effector T-cell subsets, including Th1, Th2, Th17 as well as memory CD8-positive T-cells. This is Interleukin-2 (IL2) from Halichoerus grypus (Gray seal).